Consider the following 183-residue polypeptide: Potassium-transporting ATPase KdpC subunit (183 aa).

The helical transmembrane segment at 10-30 (ASLLVLSLVTGVAYPLLVTGI) threads the bilayer.

Belongs to the KdpC family. The system is composed of three essential subunits: KdpA, KdpB and KdpC.

It localises to the cell inner membrane. Its function is as follows. Part of the high-affinity ATP-driven potassium transport (or Kdp) system, which catalyzes the hydrolysis of ATP coupled with the electrogenic transport of potassium into the cytoplasm. This subunit acts as a catalytic chaperone that increases the ATP-binding affinity of the ATP-hydrolyzing subunit KdpB by the formation of a transient KdpB/KdpC/ATP ternary complex. The chain is Potassium-transporting ATPase KdpC subunit from Pseudomonas aeruginosa (strain ATCC 15692 / DSM 22644 / CIP 104116 / JCM 14847 / LMG 12228 / 1C / PRS 101 / PAO1).